A 392-amino-acid polypeptide reads, in one-letter code: GTPase Obg (392 aa).

The 159-residue stretch at 1–159 folds into the Obg domain; sequence MKFIDEALIR…RDLQLELMLL (159 aa). One can recognise an OBG-type G domain in the interval 160–333; the sequence is ADVGMLGLPN…LCRDIMDFIE (174 aa). GTP-binding positions include 166–173, 191–195, 213–216, 283–286, and 314–316; these read GLPNAGKS, FTTLV, DIPG, NKID, and SAA. Residues serine 173 and threonine 193 each coordinate Mg(2+). The interval 362-392 is disordered; the sequence is EQVFTEDDQEGDDWDDWSEDDEEGVEIIYKP. Acidic residues predominate over residues 365 to 386; sequence FTEDDQEGDDWDDWSEDDEEGV.

This sequence belongs to the TRAFAC class OBG-HflX-like GTPase superfamily. OBG GTPase family. In terms of assembly, monomer. It depends on Mg(2+) as a cofactor.

It is found in the cytoplasm. In terms of biological role, an essential GTPase which binds GTP, GDP and possibly (p)ppGpp with moderate affinity, with high nucleotide exchange rates and a fairly low GTP hydrolysis rate. Plays a role in control of the cell cycle, stress response, ribosome biogenesis and in those bacteria that undergo differentiation, in morphogenesis control. The sequence is that of GTPase Obg from Histophilus somni (strain 129Pt) (Haemophilus somnus).